Consider the following 233-residue polypeptide: 2-C-methyl-D-erythritol 4-phosphate cytidylyltransferase (233 aa).

This sequence belongs to the IspD/TarI cytidylyltransferase family. IspD subfamily.

It carries out the reaction 2-C-methyl-D-erythritol 4-phosphate + CTP + H(+) = 4-CDP-2-C-methyl-D-erythritol + diphosphate. Its pathway is isoprenoid biosynthesis; isopentenyl diphosphate biosynthesis via DXP pathway; isopentenyl diphosphate from 1-deoxy-D-xylulose 5-phosphate: step 2/6. Functionally, catalyzes the formation of 4-diphosphocytidyl-2-C-methyl-D-erythritol from CTP and 2-C-methyl-D-erythritol 4-phosphate (MEP). The chain is 2-C-methyl-D-erythritol 4-phosphate cytidylyltransferase from Vibrio atlanticus (strain LGP32) (Vibrio splendidus (strain Mel32)).